A 285-amino-acid chain; its full sequence is Protease HtpX homolog (285 aa).

Helical transmembrane passes span 7 to 27 (TAML…MIGG) and 30 to 50 (GMTI…WFSD). Histidine 131 serves as a coordination point for Zn(2+). Residue glutamate 132 is part of the active site. A Zn(2+)-binding site is contributed by histidine 135. 2 helical membrane-spanning segments follow: residues 146–166 (ISAT…FFGG) and 177–197 (IAGI…QMAI). Glutamate 202 serves as a coordination point for Zn(2+).

Belongs to the peptidase M48B family. Zn(2+) is required as a cofactor.

It localises to the cell inner membrane. The polypeptide is Protease HtpX homolog (Burkholderia thailandensis (strain ATCC 700388 / DSM 13276 / CCUG 48851 / CIP 106301 / E264)).